Here is a 393-residue protein sequence, read N- to C-terminus: Calreticulin (393 aa).

An N-terminal signal peptide occupies residues 1–16; sequence MLSILLTLLLSKYALG. The N-linked (GlcNAc...) asparagine glycan is linked to N27. C103 and C135 are joined by a disulfide. Residues Y107, K109, Y126, and D133 each contribute to the an alpha-D-glucoside site. Repeat copies occupy residues 189–200, 208–219, 225–236, 242–253, 257–267, 271–281, and 285–295. Positions 189–253 are 4 X 12 AA approximate repeats; sequence VEEGSLEDDW…DAKKPDDWDD (65 aa). The segment at 194-277 is disordered; sequence LEDDWDMLPP…EYKGEWTPRR (84 aa). Residues 202 to 216 show a composition bias toward basic and acidic residues; that stretch reads PPKKIDDPNDKKPDD. Positions 217 to 226 are enriched in acidic residues; that stretch reads WVDEQFIDDP. 2 stretches are compositionally biased toward basic and acidic residues: residues 227 to 249 and 258 to 277; these read DDKK…KKPD and EWER…TPRR. The interval 257–295 is 3 X 11 AA approximate repeats; that stretch reads GEWERPQKDNPEYKGEWTPRRIDNPKYKGEWKPVQIDNP. Residue D315 coordinates an alpha-D-glucoside. A disordered region spans residues 351–393; the sequence is AEVAKEQSSAKDDKEEAEETKERKELPYDAKASDEPSGDHDEL. The short motif at 390–393 is the Prevents secretion from ER element; it reads HDEL.

It belongs to the calreticulin family.

It is found in the endoplasmic reticulum lumen. Functionally, molecular calcium-binding chaperone promoting folding, oligomeric assembly and quality control in the ER via the calreticulin/calnexin cycle. This lectin may interact transiently with almost all of the monoglucosylated glycoproteins that are synthesized in the ER. The sequence is that of Calreticulin from Schistosoma mansoni (Blood fluke).